The following is a 171-amino-acid chain: Peptide methionine sulfoxide reductase MsrA (171 aa).

The active site involves Cys13.

It belongs to the MsrA Met sulfoxide reductase family.

The enzyme catalyses L-methionyl-[protein] + [thioredoxin]-disulfide + H2O = L-methionyl-(S)-S-oxide-[protein] + [thioredoxin]-dithiol. The catalysed reaction is [thioredoxin]-disulfide + L-methionine + H2O = L-methionine (S)-S-oxide + [thioredoxin]-dithiol. Has an important function as a repair enzyme for proteins that have been inactivated by oxidation. Catalyzes the reversible oxidation-reduction of methionine sulfoxide in proteins to methionine. The chain is Peptide methionine sulfoxide reductase MsrA from Mycobacterium sp. (strain MCS).